Here is a 173-residue protein sequence, read N- to C-terminus: Inner membrane protein YbcI (173 aa).

Residues 1 to 12 (MPTVITHAAVPL) are Cytoplasmic-facing. Residues 13–35 (CIGLGLGSKVIPPRLLFAGIILA) form a helical membrane-spanning segment. At 36–54 (MLPDADVLSFKFGVAYGNV) the chain is on the periplasmic side. The chain crosses the membrane as a helical span at residues 55–77 (FGHRGFTHSLVFAFVVPLLCVFI). Residues 78 to 83 (GRRWFR) lie on the Cytoplasmic side of the membrane. The chain crosses the membrane as a helical span at residues 84–103 (AGLIRCWLFLTVSLLSHSLL). Residues 104 to 147 (DSVTTGGKGVGWLWPWSDERFFAPWQVIKVAPFALSRYTTPYGH) lie on the Periplasmic side of the membrane. A helical transmembrane segment spans residues 148-170 (QVIISELMWVWLPGMLLMGMLWW). Topologically, residues 171 to 173 (RRR) are cytoplasmic.

Its subcellular location is the cell inner membrane. The polypeptide is Inner membrane protein YbcI (ybcI) (Escherichia coli (strain K12)).